Reading from the N-terminus, the 264-residue chain is Triosephosphate isomerase (264 aa).

13 to 15 (NWK) contacts substrate. The active-site Electrophile is H106. Catalysis depends on E179, which acts as the Proton acceptor. Substrate contacts are provided by residues G185, S223, and 244–245 (GG).

It belongs to the triosephosphate isomerase family. As to quaternary structure, homodimer.

It localises to the cytoplasm. The catalysed reaction is D-glyceraldehyde 3-phosphate = dihydroxyacetone phosphate. The protein operates within carbohydrate biosynthesis; gluconeogenesis. Its pathway is carbohydrate degradation; glycolysis; D-glyceraldehyde 3-phosphate from glycerone phosphate: step 1/1. Involved in the gluconeogenesis. Catalyzes stereospecifically the conversion of dihydroxyacetone phosphate (DHAP) to D-glyceraldehyde-3-phosphate (G3P). The chain is Triosephosphate isomerase from Acinetobacter baumannii (strain AB0057).